The sequence spans 389 residues: S-adenosylmethionine synthase (389 aa).

An ATP-binding site is contributed by histidine 17. Aspartate 19 provides a ligand contact to Mg(2+). Glutamate 45 lines the K(+) pocket. 2 residues coordinate L-methionine: glutamate 58 and glutamine 101. The tract at residues 101–111 is flexible loop; the sequence is QSPDISQGVTE. Residues 168-170, 234-235, aspartate 243, 249-250, alanine 266, and lysine 270 contribute to the ATP site; these read DSK, RF, and RK. Aspartate 243 contacts L-methionine. Position 274 (lysine 274) interacts with L-methionine.

This sequence belongs to the AdoMet synthase family. Homotetramer; dimer of dimers. The cofactor is Mg(2+). Requires K(+) as cofactor.

It localises to the cytoplasm. The enzyme catalyses L-methionine + ATP + H2O = S-adenosyl-L-methionine + phosphate + diphosphate. It participates in amino-acid biosynthesis; S-adenosyl-L-methionine biosynthesis; S-adenosyl-L-methionine from L-methionine: step 1/1. In terms of biological role, catalyzes the formation of S-adenosylmethionine (AdoMet) from methionine and ATP. The overall synthetic reaction is composed of two sequential steps, AdoMet formation and the subsequent tripolyphosphate hydrolysis which occurs prior to release of AdoMet from the enzyme. This Syntrophotalea carbinolica (strain DSM 2380 / NBRC 103641 / GraBd1) (Pelobacter carbinolicus) protein is S-adenosylmethionine synthase.